Reading from the N-terminus, the 186-residue chain is Elongation factor P (186 aa).

It belongs to the elongation factor P family.

The protein resides in the cytoplasm. Its pathway is protein biosynthesis; polypeptide chain elongation. Functionally, involved in peptide bond synthesis. Stimulates efficient translation and peptide-bond synthesis on native or reconstituted 70S ribosomes in vitro. Probably functions indirectly by altering the affinity of the ribosome for aminoacyl-tRNA, thus increasing their reactivity as acceptors for peptidyl transferase. The chain is Elongation factor P from Shewanella frigidimarina (strain NCIMB 400).